The sequence spans 395 residues: Phosphoglycerate kinase (395 aa).

Substrate-binding positions include 22-24 (DFN), Arg38, 61-64 (HLGR), Arg119, and Arg152. ATP contacts are provided by residues Lys203, Gly294, Glu325, and 351 to 354 (GGDT).

This sequence belongs to the phosphoglycerate kinase family. In terms of assembly, monomer.

It localises to the cytoplasm. It catalyses the reaction (2R)-3-phosphoglycerate + ATP = (2R)-3-phospho-glyceroyl phosphate + ADP. It functions in the pathway carbohydrate degradation; glycolysis; pyruvate from D-glyceraldehyde 3-phosphate: step 2/5. This chain is Phosphoglycerate kinase, found in Hydrogenobaculum sp. (strain Y04AAS1).